A 232-amino-acid chain; its full sequence is Putative N-acetylmannosamine-6-phosphate 2-epimerase (232 aa).

The protein belongs to the NanE family.

It carries out the reaction an N-acyl-D-glucosamine 6-phosphate = an N-acyl-D-mannosamine 6-phosphate. It participates in amino-sugar metabolism; N-acetylneuraminate degradation; D-fructose 6-phosphate from N-acetylneuraminate: step 3/5. In terms of biological role, converts N-acetylmannosamine-6-phosphate (ManNAc-6-P) to N-acetylglucosamine-6-phosphate (GlcNAc-6-P). In Proteus mirabilis (strain HI4320), this protein is Putative N-acetylmannosamine-6-phosphate 2-epimerase.